Here is a 485-residue protein sequence, read N- to C-terminus: Serine hydroxymethyltransferase, mitochondrial (485 aa).

Lys-259 is subject to N6-(pyridoxal phosphate)lysine.

It belongs to the SHMT family. As to quaternary structure, homotetramer. Pyridoxal 5'-phosphate serves as cofactor.

The protein localises to the mitochondrion. It carries out the reaction (6R)-5,10-methylene-5,6,7,8-tetrahydrofolate + glycine + H2O = (6S)-5,6,7,8-tetrahydrofolate + L-serine. It participates in one-carbon metabolism; tetrahydrofolate interconversion. Functionally, interconversion of serine and glycine. The polypeptide is Serine hydroxymethyltransferase, mitochondrial (SHM1) (Candida glabrata (strain ATCC 2001 / BCRC 20586 / JCM 3761 / NBRC 0622 / NRRL Y-65 / CBS 138) (Yeast)).